The chain runs to 975 residues: Kinesin heavy chain (975 aa).

The 322-residue stretch at 12–333 (SIKVVCRFRP…LDFGRRAKTV (322 aa)) folds into the Kinesin motor domain. 92–99 (GQTSSGKT) is an ATP binding site. A microtubule-binding region spans residues 180-321 (VSSPEDVFEV…PASFNESETK (142 aa)). Residues 335-931 (NVVCVNEELT…DRIKEAVRQK (597 aa)) are a coiled coil. Residues 810–891 (VAKELQTLHN…LPKLEKRLRC (82 aa)) are necessary for associating with milt. Residues 932-975 (HLGRRGPQAQIAKPIRSGQGAIAIRGGGAVGGPSPLAQVNPVNS) form a globular region.

This sequence belongs to the TRAFAC class myosin-kinesin ATPase superfamily. Kinesin family. Kinesin subfamily. In terms of assembly, oligomer composed of two heavy chains and two light chains.

The protein resides in the cytoplasm. It localises to the cytoskeleton. Kinesin is a microtubule-associated force-producing protein that may play a role in organelle transport. Milt and Miro form an essential protein complex that links Khc to mitochondria for light chain-independent, anterograde transport of mitochondria. The sequence is that of Kinesin heavy chain (Khc) from Drosophila melanogaster (Fruit fly).